The sequence spans 941 residues: RNA-binding protein 4F (941 aa).

Positions 1-13 are enriched in basic and acidic residues; the sequence is MDADKQLERQLEK. The disordered stretch occupies residues 1-149; it reads MDADKQLERQ…DSDNAGGGNQ (149 aa). Residues 14–32 show a composition bias toward acidic residues; the sequence is ELDEMPAEDLDDDAYDEYD. A compositionally biased stretch (polar residues) spans 42 to 52; the sequence is GSPQQGHSESP. Ser43 is subject to Phosphoserine. The segment covering 55–65 has biased composition (basic and acidic residues); that stretch reads EEEHKSEELRQ. Positions 87–98 are enriched in acidic residues; that stretch reads SSDDEPSVEETE. Positions 111–134 are enriched in low complexity; the sequence is DSSSSSDDVGVIEGSELESNSEVS. Residue Ser153 is modified to Phosphoserine. The interval 629 to 713 is disordered; sequence RSRIKPNSQS…GPANAEAKES (85 aa). Over residues 671–680 the composition is skewed to low complexity; sequence EQQQQQQQQQ. Ser713 carries the phosphoserine modification. Phosphotyrosine is present on Tyr717. At Ser718 the chain carries Phosphoserine. An RRM domain is found at 724-801; the sequence is NKIFVRNLHP…MNISVAISNP (78 aa). Composition is skewed to basic and acidic residues over residues 862-902, 913-922, and 930-941; these read EANG…KGDD, QKGDEKKEEE, and SNDDFRKLFLKD. A disordered region spans residues 862–941; that stretch reads EANGEEQKGD…DDFRKLFLKD (80 aa).

It localises to the cytoplasm. Functionally, may be involved in gene regulation during development. Binds RNA. The sequence is that of RNA-binding protein 4F from Drosophila melanogaster (Fruit fly).